The chain runs to 79 residues: Putative defensin-like protein 80 (79 aa).

Residues 1–26 form the signal peptide; that stretch reads MDVQRSSYIFIALSIIAMFLITGVKP. Intrachain disulfides connect Cys32–Cys65, Cys36–Cys58, Cys44–Cys63, and Cys48–Cys64.

The protein belongs to the DEFL family.

The protein resides in the secreted. In Arabidopsis thaliana (Mouse-ear cress), this protein is Putative defensin-like protein 80 (LCR81).